The sequence spans 424 residues: 3-phosphoshikimate 1-carboxyvinyltransferase (424 aa).

The 3-phosphoshikimate site is built by K21, S22, and R26. Phosphoenolpyruvate is bound at residue K21. Positions 92 and 120 each coordinate phosphoenolpyruvate. Residues S163, S164, Q165, S191, D306, and K333 each coordinate 3-phosphoshikimate. Q165 contacts phosphoenolpyruvate. The active-site Proton acceptor is the D306. Phosphoenolpyruvate contacts are provided by R337, R379, and K405.

This sequence belongs to the EPSP synthase family. As to quaternary structure, monomer.

The protein localises to the cytoplasm. It carries out the reaction 3-phosphoshikimate + phosphoenolpyruvate = 5-O-(1-carboxyvinyl)-3-phosphoshikimate + phosphate. It functions in the pathway metabolic intermediate biosynthesis; chorismate biosynthesis; chorismate from D-erythrose 4-phosphate and phosphoenolpyruvate: step 6/7. Functionally, catalyzes the transfer of the enolpyruvyl moiety of phosphoenolpyruvate (PEP) to the 5-hydroxyl of shikimate-3-phosphate (S3P) to produce enolpyruvyl shikimate-3-phosphate and inorganic phosphate. The chain is 3-phosphoshikimate 1-carboxyvinyltransferase from Clostridium perfringens (strain SM101 / Type A).